A 20-amino-acid polypeptide reads, in one-letter code: CKPASIKIRLNSTADTGFYV.

This sequence belongs to the bacterial ribosomal protein bL33 family.

The protein is Large ribosomal subunit protein bL33 (rpmG) of Brevundimonas vesicularis (Pseudomonas vesicularis).